The primary structure comprises 739 residues: Protein kinase C (739 aa).

In terms of domain architecture, C2 spans Met-1 to Val-117. 2 consecutive Phorbol-ester/DAG-type zinc fingers follow at residues Gly-176–Cys-226 and Pro-251–Cys-301. The region spanning Phe-408 to Phe-665 is the Protein kinase domain. ATP-binding positions include Leu-414–Val-422 and Lys-437. Residue Asp-532 is the Proton acceptor of the active site. Residues Ala-666 to Lys-737 enclose the AGC-kinase C-terminal domain.

The protein belongs to the protein kinase superfamily. AGC Ser/Thr protein kinase family. PKC subfamily.

It carries out the reaction L-seryl-[protein] + ATP = O-phospho-L-seryl-[protein] + ADP + H(+). It catalyses the reaction L-threonyl-[protein] + ATP = O-phospho-L-threonyl-[protein] + ADP + H(+). PKC is activated by diacylglycerol which in turn phosphorylates a range of cellular proteins. PKC also serves as the receptor for phorbol esters, a class of tumor promoters. The sequence is that of Protein kinase C (Pkc98E) from Drosophila melanogaster (Fruit fly).